The chain runs to 226 residues: Lysoplasmalogenase TMEM86B (226 aa).

The Cytoplasmic segment spans residues M1–K23. A helical transmembrane segment spans residues W24 to I40. Residues P41–S46 are Extracellular-facing. Residues W47–L64 traverse the membrane as a helical segment. Residues R65–R76 lie on the Cytoplasmic side of the membrane. A helical transmembrane segment spans residues L77–W93. The Extracellular segment spans residues P94–H99. A helical membrane pass occupies residues G100–L117. At T118–G123 the chain is on the cytoplasmic side. A helical transmembrane segment spans residues L124–L140. Residues W141–D146 are Extracellular-facing. Residues L147–W163 traverse the membrane as a helical segment. Over R164 to S171 the chain is Cytoplasmic. A helical transmembrane segment spans residues T172–W188. Residues N189–R199 are Extracellular-facing. Residues L200–V217 traverse the membrane as a helical segment. Residues S218–N226 are Cytoplasmic-facing.

It belongs to the TMEM86 family. As to quaternary structure, homodimer.

It localises to the endoplasmic reticulum membrane. The protein localises to the cytoplasm. It carries out the reaction a 1-O-(1Z-alkenyl)-sn-glycero-3-phosphocholine + H2O = a 2,3-saturated aldehyde + sn-glycerol 3-phosphocholine. The catalysed reaction is a 1-O-(1Z-alkenyl)-sn-glycero-3-phosphoethanolamine + H2O = a 2,3-saturated aldehyde + sn-glycero-3-phosphoethanolamine. With respect to regulation, competitively inhibited by lysophosphatidic acid. Its function is as follows. Catalyzes the hydrolysis of the vinyl ether bond of choline or ethanolamine lysoplasmalogens, forming fatty aldehyde and glycerophosphocholine or glycerophosphoethanolamine, respectively and is specific for the sn-2-deacylated (lyso) form of plasmalogen. This is Lysoplasmalogenase TMEM86B (TMEM86B) from Sus scrofa (Pig).